Consider the following 147-residue polypeptide: Phosphoribosyl-AMP cyclohydrolase (147 aa).

Aspartate 91 is a binding site for Mg(2+). Cysteine 92 is a Zn(2+) binding site. Mg(2+) is bound by residues aspartate 93 and aspartate 95. 2 residues coordinate Zn(2+): cysteine 109 and cysteine 116.

Belongs to the PRA-CH family. As to quaternary structure, homodimer. Mg(2+) is required as a cofactor. It depends on Zn(2+) as a cofactor.

The protein localises to the cytoplasm. It catalyses the reaction 1-(5-phospho-beta-D-ribosyl)-5'-AMP + H2O = 1-(5-phospho-beta-D-ribosyl)-5-[(5-phospho-beta-D-ribosylamino)methylideneamino]imidazole-4-carboxamide. It participates in amino-acid biosynthesis; L-histidine biosynthesis; L-histidine from 5-phospho-alpha-D-ribose 1-diphosphate: step 3/9. Catalyzes the hydrolysis of the adenine ring of phosphoribosyl-AMP. In Rhodopseudomonas palustris (strain BisB18), this protein is Phosphoribosyl-AMP cyclohydrolase.